Consider the following 199-residue polypeptide: NAD(P)H dehydrogenase (quinone) (199 aa).

The region spanning 4 to 190 (VLVLYYSAYG…AGARYQGRMI (187 aa)) is the Flavodoxin-like domain. FMN is bound by residues 10-15 (SAYGHI) and 78-80 (TRF). Tyr-12 lines the NAD(+) pocket. Residue Trp-98 coordinates substrate. Residues 113–119 (SSATQHG) and His-134 contribute to the FMN site.

The protein belongs to the WrbA family. FMN serves as cofactor.

It carries out the reaction a quinone + NADH + H(+) = a quinol + NAD(+). The catalysed reaction is a quinone + NADPH + H(+) = a quinol + NADP(+). The protein is NAD(P)H dehydrogenase (quinone) of Nitrobacter winogradskyi (strain ATCC 25391 / DSM 10237 / CIP 104748 / NCIMB 11846 / Nb-255).